The sequence spans 114 residues: Small ribosomal subunit protein bS16 (114 aa).

It belongs to the bacterial ribosomal protein bS16 family.

The sequence is that of Small ribosomal subunit protein bS16 from Prochlorococcus marinus subsp. pastoris (strain CCMP1986 / NIES-2087 / MED4).